A 677-amino-acid chain; its full sequence is Protein PALS1 (677 aa).

A required for the correct localization of PALS1 and PATJ at cell-cell contacts and the normal formation of tight junctions and adherens junctions region spans residues 1-347 (MTTSHMNGYV…AQIKSPPIKE (347 aa)). Residues 39 to 81 (ELGARTLPVRRSAQLEKIRQQQEDRRRREEEGRSRQELDLNSS) form a disordered region. The span at 51 to 76 (AQLEKIRQQQEDRRRREEEGRSRQEL) shows a compositional bias: basic and acidic residues. L27 domains are found at residues 121-178 (ALLE…NRPS) and 180-236 (PYPL…MQLE). Positions 258 to 338 (IVRIEKAKDI…VLSFVLIPSA (81 aa)) constitute a PDZ domain. Positions 347–419 (ETVVHVKAHF…PGKSFQQQRE (73 aa)) constitute an SH3 domain. In terms of domain architecture, Guanylate kinase-like spans 481-662 (KRPIALIGPP…SYQELLRLIN (182 aa)). 488–495 (GPPNCGQN) is an ATP binding site. The tract at residues 506–526 (PDRFAGPVPHTTRSRRDAEAN) is disordered.

This sequence belongs to the MAGUK family. In terms of tissue distribution, expressed in the retina and in the neural tube.

Its subcellular location is the apical cell membrane. The protein localises to the cell junction. It is found in the tight junction. Its function is as follows. Plays a role in tight junction biogenesis and in the establishment of cell polarity in epithelial cells. Also involved in adherens junction biogenesis. Required for polarized epithelial organization, cell-cell adhesion and remodeling of myocardial cells during heart tube elongation during embryogenesis. Functions in cellular patterning of the retina and development of the retinal pigmented epithelium. Also required for embryo body axis specification. The chain is Protein PALS1 (pals1a) from Danio rerio (Zebrafish).